The following is a 160-amino-acid chain: 2-C-methyl-D-erythritol 2,4-cyclodiphosphate synthase (160 aa).

The a divalent metal cation site is built by Asp-9 and His-11. 4-CDP-2-C-methyl-D-erythritol 2-phosphate-binding positions include 9–11 and 35–36; these read DVH and HS. A divalent metal cation is bound at residue His-43. 4-CDP-2-C-methyl-D-erythritol 2-phosphate is bound by residues 57-59, 62-66, 101-107, 133-136, Phe-140, and Arg-143; these read DIG, FPDTD, AQKPKMA, and TTTE.

This sequence belongs to the IspF family. Homotrimer. A divalent metal cation serves as cofactor.

The catalysed reaction is 4-CDP-2-C-methyl-D-erythritol 2-phosphate = 2-C-methyl-D-erythritol 2,4-cyclic diphosphate + CMP. The protein operates within isoprenoid biosynthesis; isopentenyl diphosphate biosynthesis via DXP pathway; isopentenyl diphosphate from 1-deoxy-D-xylulose 5-phosphate: step 4/6. Involved in the biosynthesis of isopentenyl diphosphate (IPP) and dimethylallyl diphosphate (DMAPP), two major building blocks of isoprenoid compounds. Catalyzes the conversion of 4-diphosphocytidyl-2-C-methyl-D-erythritol 2-phosphate (CDP-ME2P) to 2-C-methyl-D-erythritol 2,4-cyclodiphosphate (ME-CPP) with a corresponding release of cytidine 5-monophosphate (CMP). In Geobacillus thermodenitrificans (strain NG80-2), this protein is 2-C-methyl-D-erythritol 2,4-cyclodiphosphate synthase.